The primary structure comprises 605 residues: Elongation factor 4 (605 aa).

One can recognise a tr-type G domain in the interval 11–193 (KRIRNFSIIA…KVVSNIPSPR (183 aa)). GTP is bound by residues 23–28 (DHGKST) and 140–143 (NKID).

The protein belongs to the TRAFAC class translation factor GTPase superfamily. Classic translation factor GTPase family. LepA subfamily.

The protein resides in the cell membrane. The catalysed reaction is GTP + H2O = GDP + phosphate + H(+). In terms of biological role, required for accurate and efficient protein synthesis under certain stress conditions. May act as a fidelity factor of the translation reaction, by catalyzing a one-codon backward translocation of tRNAs on improperly translocated ribosomes. Back-translocation proceeds from a post-translocation (POST) complex to a pre-translocation (PRE) complex, thus giving elongation factor G a second chance to translocate the tRNAs correctly. Binds to ribosomes in a GTP-dependent manner. The sequence is that of Elongation factor 4 from Phytoplasma mali (strain AT).